A 497-amino-acid chain; its full sequence is Di-/tripeptide transporter (497 aa).

At 1 to 36 (MQNLNKTEKTFFGQPRGLLTLFQTEFWERFSYYGMR) the chain is on the cytoplasmic side. A helical transmembrane segment spans residues 37–55 (AILVYYLYALTTADNAGLG). Over 56 to 64 (LPKAQAMAI) the chain is Extracellular. The chain crosses the membrane as a helical span at residues 65–83 (VSIYGALVYLSTIVGGWVA). Topologically, residues 84–92 (DRLLGASRT) are cytoplasmic. The helical transmembrane segment at 93 to 111 (IFLGGILITLGHIALATPF) threads the bilayer. Residues 112-115 (GLSS) lie on the Extracellular side of the membrane. The helical transmembrane segment at 116–134 (LFVALFLIILGTGMLKPNI) threads the bilayer. The Cytoplasmic portion of the chain corresponds to 135 to 154 (SNMVGHLYSKDDSRRDTGFN). Residues 155 to 173 (IFVVGINMGSLIAPLIVGT) traverse the membrane as a helical segment. The Extracellular segment spans residues 174–181 (VGQGVNYH). The helical transmembrane segment at 182-200 (LGFSLAAIGMIFALFAYWY) threads the bilayer. The Cytoplasmic portion of the chain corresponds to 201-224 (GRLRHFPEIGREPSNPMDSKARRN). The helical transmembrane segment at 225 to 243 (FLITLTIVVIVAIIGFFLL) threads the bilayer. Residues 244–254 (YQASPANFINN) lie on the Extracellular side of the membrane. Residues 255–273 (FINVLSIIGIVVPIIYFVM) traverse the membrane as a helical segment. Residues 274-293 (MFTSKKVESDERRKLTAYIP) lie on the Cytoplasmic side of the membrane. The chain crosses the membrane as a helical span at residues 294–312 (LFLSAIVFWAIEEQSSTII). Over 313-335 (AVWGESRSNLDPTWFGITFHIDP) the chain is Extracellular. A helical transmembrane segment spans residues 336–354 (SWYQLLNPLFIVLLSPIFV). The Cytoplasmic portion of the chain corresponds to 355-372 (RLWNKLGERQPSTIVKFG). The helical transmembrane segment at 373–391 (LGLMLTGISYLIMTLPGLL) threads the bilayer. The Extracellular segment spans residues 392-425 (NGTSGRASALWLVLMFAVQMAGELLVSPVGLSVS). The helical transmembrane segment at 426-444 (TKLAPVAFQSQMMAMWFLA) threads the bilayer. At 445–497 (DSTSQAINAQITPLFKAATEVHFFAITGIIGIIVGIILLIVKKPILKLMGDVR) the chain is on the cytoplasmic side.

Belongs to the major facilitator superfamily. Proton-dependent oligopeptide transporter (POT/PTR) (TC 2.A.17) family.

It localises to the cell membrane. Functionally, proton-dependent uptake of di- or tri-peptides. This Lactococcus lactis subsp. lactis (strain IL1403) (Streptococcus lactis) protein is Di-/tripeptide transporter (dtpT).